The following is a 218-amino-acid chain: Carboxylesterase 2 (218 aa).

Active-site charge relay system residues include serine 114, aspartate 168, and histidine 199.

Belongs to the AB hydrolase superfamily. AB hydrolase 2 family. As to quaternary structure, homodimer.

It carries out the reaction a carboxylic ester + H2O = an alcohol + a carboxylate + H(+). Its function is as follows. Hydrolyzes carboxylic ester bonds with relatively broad substrate specificity. This is Carboxylesterase 2 (estB) from Pseudomonas fluorescens.